We begin with the raw amino-acid sequence, 253 residues long: Octanoyltransferase (253 aa).

Residues 47–236 (PETPDQVWLV…ALCEVLAARE (190 aa)) form the BPL/LPL catalytic domain. Substrate contacts are provided by residues 87 to 94 (RGGQITYH), 159 to 161 (ALG), and 172 to 174 (GVS). Residue cysteine 190 is the Acyl-thioester intermediate of the active site.

The protein belongs to the LipB family.

It localises to the cytoplasm. It carries out the reaction octanoyl-[ACP] + L-lysyl-[protein] = N(6)-octanoyl-L-lysyl-[protein] + holo-[ACP] + H(+). It functions in the pathway protein modification; protein lipoylation via endogenous pathway; protein N(6)-(lipoyl)lysine from octanoyl-[acyl-carrier-protein]: step 1/2. Catalyzes the transfer of endogenously produced octanoic acid from octanoyl-acyl-carrier-protein onto the lipoyl domains of lipoate-dependent enzymes. Lipoyl-ACP can also act as a substrate although octanoyl-ACP is likely to be the physiological substrate. The protein is Octanoyltransferase of Cupriavidus pinatubonensis (strain JMP 134 / LMG 1197) (Cupriavidus necator (strain JMP 134)).